The primary structure comprises 275 residues: Large ribosomal subunit protein uL2cz/uL2cy (275 aa).

Disordered regions lie at residues 1 to 26 (MAIH…VKSN) and 224 to 275 (MNPV…RRTK). The segment covering 7-26 (KTSTPSTRNGTVDSRQVKSN) has biased composition (polar residues).

This sequence belongs to the universal ribosomal protein uL2 family. In terms of assembly, part of the 50S ribosomal subunit.

It localises to the plastid. Its subcellular location is the chloroplast. The chain is Large ribosomal subunit protein uL2cz/uL2cy (rpl2-A) from Phaseolus angularis (Azuki bean).